We begin with the raw amino-acid sequence, 149 residues long: Large ribosomal subunit protein uL22c (149 aa).

Belongs to the universal ribosomal protein uL22 family. In terms of assembly, part of the 50S ribosomal subunit.

It is found in the plastid. The protein resides in the chloroplast. Its function is as follows. This protein binds specifically to 23S rRNA. Functionally, the globular domain of the protein is located near the polypeptide exit tunnel on the outside of the subunit, while an extended beta-hairpin is found that lines the wall of the exit tunnel in the center of the 70S ribosome. This Pelargonium hortorum (Common geranium) protein is Large ribosomal subunit protein uL22c (rpl22-A).